The following is a 342-amino-acid chain: MSANGPAAEPADGGRAVPAGGGEAVPAGGGRAVPAGGGEAAGTVVAVVGPTAAGKSALSIALAHALDGEVVNADSMQLYRGMDIGTAKLTTGEREGVPHHLLDIWPVTEPASVAEYQRLARAAVDDILARGRVPLLVGGSGLYVRAVLERFEFPGTDPAVRARLEAELAQAGPAPLHARLRAADPDAAASILPGNGRRIVRALEVIELTGAPFTAALPDPSPYYRSVQVGVDLDTAPLDERIALRVDRMWADGLVAETRALAAQGLAGGRTASRALGYQQVLRFLAGELTETEAHQETIRATRRFVRRQRSWFRRDPRIAWLDSAGSGLVADALRAVRAAAR.

A disordered region spans residues 1 to 30; it reads MSANGPAAEPADGGRAVPAGGGEAVPAGGG. Residues 19-30 show a composition bias toward gly residues; the sequence is AGGGEAVPAGGG. 49–56 provides a ligand contact to ATP; it reads GPTAAGKS. 51–56 provides a ligand contact to substrate; it reads TAAGKS. The interaction with substrate tRNA stretch occupies residues 74-77; it reads DSMQ.

The protein belongs to the IPP transferase family. As to quaternary structure, monomer. Mg(2+) serves as cofactor.

The catalysed reaction is adenosine(37) in tRNA + dimethylallyl diphosphate = N(6)-dimethylallyladenosine(37) in tRNA + diphosphate. In terms of biological role, catalyzes the transfer of a dimethylallyl group onto the adenine at position 37 in tRNAs that read codons beginning with uridine, leading to the formation of N6-(dimethylallyl)adenosine (i(6)A). This Salinispora arenicola (strain CNS-205) protein is tRNA dimethylallyltransferase.